A 287-amino-acid polypeptide reads, in one-letter code: Shikimate dehydrogenase (NADP(+)) (287 aa).

Shikimate is bound by residues 20 to 22 and Thr-67; that span reads SRS. Lys-71 (proton acceptor) is an active-site residue. Glu-84 is an NADP(+) binding site. The shikimate site is built by Asn-93 and Asp-108. NADP(+) contacts are provided by residues 132–136, 156–161, and Met-226; these read GAGGA and NRTAAR. Tyr-228 provides a ligand contact to shikimate. An NADP(+)-binding site is contributed by Gly-250.

It belongs to the shikimate dehydrogenase family. In terms of assembly, homodimer.

The enzyme catalyses shikimate + NADP(+) = 3-dehydroshikimate + NADPH + H(+). It participates in metabolic intermediate biosynthesis; chorismate biosynthesis; chorismate from D-erythrose 4-phosphate and phosphoenolpyruvate: step 4/7. Its function is as follows. Involved in the biosynthesis of the chorismate, which leads to the biosynthesis of aromatic amino acids. Catalyzes the reversible NADPH linked reduction of 3-dehydroshikimate (DHSA) to yield shikimate (SA). The protein is Shikimate dehydrogenase (NADP(+)) of Bordetella parapertussis (strain 12822 / ATCC BAA-587 / NCTC 13253).